A 385-amino-acid chain; its full sequence is Rhomboid domain-containing protein 3 (385 aa).

Transmembrane regions (helical) follow at residues 13-33, 58-78, 95-115, 146-166, and 168-188; these read ALPLASSVLMLLLSCLWLLGA, LGHTALPGLLLSLLLLPTLGW, VLALATGLLAVLLAGLGVSGA, WLLPWLLLALTLLLSSEPPFL, and LLCGLLTGLAYAAGAFQWLEL. The disordered stretch occupies residues 238–264; it reads PPYLASSDSWPHSDGSAQLPPRLGPGQ. The UBA domain occupies 322 to 361; that stretch reads SVSSLRLQQLQHMGFPTEQAAVALAATGRVEGAVSLLVEG.

Its subcellular location is the membrane. This chain is Rhomboid domain-containing protein 3 (Rhbdd3), found in Mus musculus (Mouse).